The following is a 620-amino-acid chain: Zinc finger protein GLIS1 (620 aa).

The disordered stretch occupies residues 108–132; sequence PLTGDLGGPSKRARPGPASTDSHEG. The C2H2-type 1 zinc finger occupies 195–220; sequence QACRWVDCCAAYEQQEELVRHIEKSH. Residues 229–256 form a C2H2-type 2; atypical zinc finger; sequence FTCFWAGCVRRYKPFNARYKLLIHMRVH. 3 C2H2-type zinc fingers span residues 262–286, 292–316, and 322–346; these read NKCM…LRSH, YLCQ…QRTH, and YACQ…VKAH. Residues 340–356 carry the Bipartite nuclear localization signal motif; the sequence is RKHVKAHSAKEQQVRKK. Residues 414–515 are disordered; that stretch reads ASGLLPPAHD…PPLPSPQGYQ (102 aa). The segment covering 477-488 has biased composition (low complexity); that stretch reads SSQSHSPGGQPF. Positions 489–510 are enriched in pro residues; that stretch reads PTLPSKPSYPPFQSPPPPPLPS.

This sequence belongs to the GLI C2H2-type zinc-finger protein family. Interacts with KLF4. Interacts with POU5F1 and/or POU5F1B. Interacts with SOX2.

Its subcellular location is the nucleus. Its function is as follows. Acts both as a repressor and an activator of transcription. Binds to the consensus sequence 5'-GACCACCCAC-3'. By controlling the expression of genes involved in cell differentiation inhibits the lineage commitment of multipotent cells. Prevents, for instance, the differentiation of multipotent mesenchymal cells into adipocyte and osteoblast. The sequence is that of Zinc finger protein GLIS1 from Homo sapiens (Human).